We begin with the raw amino-acid sequence, 513 residues long: MQSVLVLDFGSQYTQLIARRIRELGIYSEILPYNTTPETIREHAPKAIILSGGPTSVYGESAILPHEGIFSLGLPILGICYGLQAIAKHFGGEVASSAKQEFGRAKMLVSRDGEPESMLFRNIPDSDVWMSHGDKVVNLPDGFRITASSANSEMCALETYGSKGALKVFGLQFHPEVQHTLYGKQLLSNFLIDIAGITPDWSPKHFIDHQIEEIRRTAGDETVICGISGGVDSSVAAVLVSRAIGKNLHCVFVDNGLLRKNEADKVMQFLKHLGLRLTLADASELFLKRLKNVASPEKKRKIIGRTFIQVFEEQLDKEKFLVQGTLYPDVIESVSVKGPSETIKSHHNVGGLPKRMKLKLIEPLRELFKDEVRAVGRELGIAEDILMRHPFPGPGLAVRVLGSVSKERLDILRDADEIFLEELKSSGLYQKVWQAFSVLLPVQSVGVMGDKRTYENVLALRAVESSDGMTADWAQLPHDFLARVSNRIINEVRGINRVAYDISSKPPATIEWE.

Residues 3–200 (SVLVLDFGSQ…LIDIAGITPD (198 aa)) form the Glutamine amidotransferase type-1 domain. Cys-80 functions as the Nucleophile in the catalytic mechanism. Catalysis depends on residues His-174 and Glu-176. The GMPS ATP-PPase domain maps to 201-388 (WSPKHFIDHQ…LGIAEDILMR (188 aa)). 228-234 (SGGVDSS) is an ATP binding site.

As to quaternary structure, homodimer.

The catalysed reaction is XMP + L-glutamine + ATP + H2O = GMP + L-glutamate + AMP + diphosphate + 2 H(+). It participates in purine metabolism; GMP biosynthesis; GMP from XMP (L-Gln route): step 1/1. Catalyzes the synthesis of GMP from XMP. In Chlorobium limicola (strain DSM 245 / NBRC 103803 / 6330), this protein is GMP synthase [glutamine-hydrolyzing].